The chain runs to 332 residues: MSVELRVGNRFRIGQKIGSGSFGEIFRGTNIQTGDPVAIKLEQVKTRHPQLAFEARFYRVLNAGGGVVGIPNVLYHGVEGEFNVMVIDLLGPSLEDLFSFCGRRLSLKTTLMLAEQMIARIEFVHSKSIIHRDIKPDNFLMGTGKKGHHVYIIDFGLAKKYRDARTHQHIPYKEGKSLTGTARYCSINTHIGIEQSRRDDLEGIGYILMYFLRGSLPWQGLKAHTKQEKYARISDRKQTTSVETLCRSFPAEFAAYLNYTRSLHFEDKPDYSYLKRLFRELFVREGYHVDYVFDWTLKRIHDTLQEGRADQQQQQQQQQQRRGSEKEDEHPV.

The Protein kinase domain maps to 11 to 282 (FRIGQKIGSG…YLKRLFRELF (272 aa)). ATP is bound by residues 17 to 25 (IGSGSFGEI) and Lys-40. Residue Asp-133 is the Proton acceptor of the active site. Residues 306–332 (EGRADQQQQQQQQQQRRGSEKEDEHPV) form a disordered region. A compositionally biased stretch (low complexity) spans 311–320 (QQQQQQQQQQ). Residues 322 to 332 (RGSEKEDEHPV) are compositionally biased toward basic and acidic residues.

Belongs to the protein kinase superfamily. Ser/Thr protein kinase family. It depends on Mg(2+) as a cofactor.

The enzyme catalyses L-seryl-[protein] + ATP = O-phospho-L-seryl-[protein] + ADP + H(+). The catalysed reaction is L-threonyl-[protein] + ATP = O-phospho-L-threonyl-[protein] + ADP + H(+). Functionally, serine/threonine protein kinase. May phosphorylate ZC3H11 during unstressed conditions, leading to proteasome-dependent degradation of ZC3H11. This chain is Casein kinase I isoform 2, found in Trypanosoma brucei brucei.